Consider the following 389-residue polypeptide: uncharacterized protein (389 aa).

WD repeat units follow at residues 11–53 (SFGS…QKIK), 146–186 (SHHD…EEDA), and 289–330 (AHGD…LDIP). Serine 351 is subject to Phosphoserine. The interval 361-389 (QKESVSTRPRKEKHKKAKKHSMKSRFKPY) is disordered. Residues 368–389 (RPRKEKHKKAKKHSMKSRFKPY) show a composition bias toward basic residues.

This is an uncharacterized protein from Saccharomyces cerevisiae (strain ATCC 204508 / S288c) (Baker's yeast).